We begin with the raw amino-acid sequence, 208 residues long: MIVIVDYDTGNTRNVKKALDYLGVNNQLSADPAIIMAASGLILPGVGAFKEAMKALNQRQLVPVIQAFAATGKPLLGICLGMQLLFDRSFEFGETAGLGLIPGEVVAIPTDSGLAVPHMGWNTNSLTQPDLFAAVFADQATYFVHSFYATTLPQFTLATTDYGQPLTSIVRRNNVLGTQFHPEKSGAIGLAGLKKFKEMTEDEALSRD.

Positions 1-206 constitute a Glutamine amidotransferase type-1 domain; the sequence is MIVIVDYDTG…KEMTEDEALS (206 aa). C79 functions as the Nucleophile in the catalytic mechanism. Residues H181 and E183 contribute to the active site.

As to quaternary structure, heterodimer of HisH and HisF.

It localises to the cytoplasm. The catalysed reaction is 5-[(5-phospho-1-deoxy-D-ribulos-1-ylimino)methylamino]-1-(5-phospho-beta-D-ribosyl)imidazole-4-carboxamide + L-glutamine = D-erythro-1-(imidazol-4-yl)glycerol 3-phosphate + 5-amino-1-(5-phospho-beta-D-ribosyl)imidazole-4-carboxamide + L-glutamate + H(+). It carries out the reaction L-glutamine + H2O = L-glutamate + NH4(+). It participates in amino-acid biosynthesis; L-histidine biosynthesis; L-histidine from 5-phospho-alpha-D-ribose 1-diphosphate: step 5/9. In terms of biological role, IGPS catalyzes the conversion of PRFAR and glutamine to IGP, AICAR and glutamate. The HisH subunit catalyzes the hydrolysis of glutamine to glutamate and ammonia as part of the synthesis of IGP and AICAR. The resulting ammonia molecule is channeled to the active site of HisF. The polypeptide is Imidazole glycerol phosphate synthase subunit HisH (Lacticaseibacillus casei (strain BL23) (Lactobacillus casei)).